Here is a 475-residue protein sequence, read N- to C-terminus: Putative amidase AmiD (475 aa).

Active-site charge relay system residues include Lys-93 and Ser-166. The active-site Acyl-ester intermediate is the Ser-190.

The protein belongs to the amidase family.

It carries out the reaction a monocarboxylic acid amide + H2O = a monocarboxylate + NH4(+). This chain is Putative amidase AmiD (amiD), found in Mycobacterium bovis (strain ATCC BAA-935 / AF2122/97).